Here is a 957-residue protein sequence, read N- to C-terminus: MTTPLKPLDDAATSFARRHIGPSPRDVAAMLETVNAKSVAELMAQTLPGTIRQAAPLDIGPALSETEALSHMRALAAQNQVFTSLIGQGYAGTIMPAVIQRNILENPAWYTAYTPYQPEISQGRLEALFNFQTMICDLTGLDVANASLLDEGTAAAEAMALAERSARAKTKAFFVDHNVHPQTLTVLRTRAEPLGWKLIVGDPAGDLDGAEVFGGLLQYPDTTGALRDPRAAIAKLHDKGALAILAADLLALTLIASPGELGADIAIGSAQRFGVPMGYGGPHAAYMAVRDALKRSLPGRIVGLSVDSRGAPAYRLALQTREQHIRREKATSNICTAQVLLAVIAAMYAVYHGPAGLKAIARTVHRRTAVLAAGLRKLGFAPANDAFFDTVTVEAGANASSIIARAEAERINLGHNGSRLRIALDETTTADVVEAAWRAFGGELSYADIEAEARDAVPAELKRQRPYLTHPVFHAHRSETEMLRYLRKLADRDLALDRAMIPLGSCTMKLNATTEMIPLTWPEFSSLHPFVPRAQAAGYHAMFADLQDWLCRISGYDAVSLQPNSGAQGEYAGLLAIRGYHAARGEAHRTICLIPSSAHGTNPASAHMVGMEVVVVGCDAGGNVDLADLKAKAEAHSQKLAAIMITYPSTHGVFEEHIRDICDIVHAHGGQVYLDGANLNAQVGLARPGDYGADVSHFNLHKTFCIPHGGGGPGMGPIGVKAHLAPFLPGHPATDGKTAHPVGPVSAAPYGSASILTISYIYMLLMGGEGLTRATEIAILNANYVAARLDAHFPVLYRNERGRIAHECIIDPRLLKQTSGVTVDDIAKRLIDYGFHAPTMSFPVAGTLMIEPTESESKAELDRFCDAMIAIRKEIAEVEQGRFTIEASPLRHAPHTVHDIADDEWSRAYRRSEGCFPAGSSRTDKYWCPVGRVDNVYGDRNLVCSCPPVEDYAQAAE.

The residue at position 702 (Lys702) is an N6-(pyridoxal phosphate)lysine.

Belongs to the GcvP family. In terms of assembly, the glycine cleavage system is composed of four proteins: P, T, L and H. It depends on pyridoxal 5'-phosphate as a cofactor.

It catalyses the reaction N(6)-[(R)-lipoyl]-L-lysyl-[glycine-cleavage complex H protein] + glycine + H(+) = N(6)-[(R)-S(8)-aminomethyldihydrolipoyl]-L-lysyl-[glycine-cleavage complex H protein] + CO2. The glycine cleavage system catalyzes the degradation of glycine. The P protein binds the alpha-amino group of glycine through its pyridoxal phosphate cofactor; CO(2) is released and the remaining methylamine moiety is then transferred to the lipoamide cofactor of the H protein. The polypeptide is Glycine dehydrogenase (decarboxylating) (Bradyrhizobium sp. (strain ORS 278)).